A 183-amino-acid polypeptide reads, in one-letter code: Streptavidin (183 aa).

Positions 1–24 (MRKIVVAAIAVSLTTVSITASASA) are cleaved as a signal peptide. The region spanning 37 to 159 (AEAGITGTWY…GHDTFTKVKP (123 aa)) is the Avidin-like domain. 2 residues coordinate biotin: tyrosine 67 and tyrosine 78. The Cell attachment site; atypical signature appears at 83-85 (RYD). Tryptophan 116, tryptophan 132, and tryptophan 144 together coordinate biotin.

It belongs to the avidin/streptavidin family. As to quaternary structure, homotetramer.

It localises to the secreted. The biological function of streptavidin is not known. Forms a strong non-covalent specific complex with biotin (one molecule of biotin per subunit of streptavidin). The protein is Streptavidin of Streptomyces avidinii.